The following is a 313-amino-acid chain: D-alanine--D-alanine ligase (313 aa).

The ATP-grasp domain occupies 108–308 (KLVWQQLGIP…YQELVVKVLA (201 aa)). Residue 138-193 (VAKLGLPLFVKPASEGSSVAVIKVKTADALVPALEEAVKFDKIVVVEKSIEGGGEY) participates in ATP binding. Mg(2+) is bound by residues aspartate 262, glutamate 275, and asparagine 277.

It belongs to the D-alanine--D-alanine ligase family. The cofactor is Mg(2+). It depends on Mn(2+) as a cofactor.

The protein localises to the cytoplasm. It carries out the reaction 2 D-alanine + ATP = D-alanyl-D-alanine + ADP + phosphate + H(+). Its pathway is cell wall biogenesis; peptidoglycan biosynthesis. Cell wall formation. The sequence is that of D-alanine--D-alanine ligase from Paraburkholderia phymatum (strain DSM 17167 / CIP 108236 / LMG 21445 / STM815) (Burkholderia phymatum).